The sequence spans 421 residues: Serine--tRNA ligase (421 aa).

230-232 contacts L-serine; the sequence is TAE. 259–261 serves as a coordination point for ATP; the sequence is RRE. Residue Glu-282 participates in L-serine binding. 346 to 349 contributes to the ATP binding site; sequence EISS. L-serine is bound at residue Ser-381.

This sequence belongs to the class-II aminoacyl-tRNA synthetase family. Type-1 seryl-tRNA synthetase subfamily. In terms of assembly, homodimer. The tRNA molecule binds across the dimer.

It is found in the cytoplasm. It catalyses the reaction tRNA(Ser) + L-serine + ATP = L-seryl-tRNA(Ser) + AMP + diphosphate + H(+). The enzyme catalyses tRNA(Sec) + L-serine + ATP = L-seryl-tRNA(Sec) + AMP + diphosphate + H(+). Its pathway is aminoacyl-tRNA biosynthesis; selenocysteinyl-tRNA(Sec) biosynthesis; L-seryl-tRNA(Sec) from L-serine and tRNA(Sec): step 1/1. Catalyzes the attachment of serine to tRNA(Ser). Is also able to aminoacylate tRNA(Sec) with serine, to form the misacylated tRNA L-seryl-tRNA(Sec), which will be further converted into selenocysteinyl-tRNA(Sec). The chain is Serine--tRNA ligase from Acidithiobacillus ferrooxidans (strain ATCC 23270 / DSM 14882 / CIP 104768 / NCIMB 8455) (Ferrobacillus ferrooxidans (strain ATCC 23270)).